A 148-amino-acid chain; its full sequence is Ubiquitin-like protein 4A (148 aa).

Residues 1–76 (MQLTVKALKG…LNLMVKEQVA (76 aa)) enclose the Ubiquitin-like domain.

Component of the bag6/bat3 complex.

The protein localises to the cytoplasm. Its subcellular location is the cytosol. It is found in the nucleus. Functionally, as part of a cytosolic protein quality control complex, the bag6/bat3 complex, maintains misfolded and hydrophobic patches-containing proteins in a soluble state and participates in their proper delivery to the endoplasmic reticulum or alternatively can promote their sorting to the proteasome where they undergo degradation. The bag6/bat3 complex is involved in the post-translational delivery of tail-anchored/type II transmembrane proteins to the endoplasmic reticulum membrane. Similarly, the bag6/bat3 complex also functions as a sorting platform for proteins of the secretory pathway that are mislocalized to the cytosol either delivering them to the proteasome for degradation or to the endoplasmic reticulum. The bag6/bat3 complex also plays a role in the endoplasmic reticulum-associated degradation (ERAD), a quality control mechanism that eliminates unwanted proteins of the endoplasmic reticulum through their retrotranslocation to the cytosol and their targeting to the proteasome. It maintains these retrotranslocated proteins in an unfolded yet soluble state condition in the cytosol to ensure their proper delivery to the proteasome. In Xenopus tropicalis (Western clawed frog), this protein is Ubiquitin-like protein 4A (ubl4a).